A 461-amino-acid chain; its full sequence is Ribonuclease inhibitor (461 aa).

N-acetylserine is present on Ser2. A 2 X 5 AA tandem repeats of S-L-D-I-Q region spans residues 2–11 (SLDIQSLDIQ). 15 LRR repeats span residues 20 to 48 (WAEL…CKDI), 49 to 76 (SSAL…VHCV), 77 to 105 (LQGL…CGVL), 106 to 133 (SSTL…LQLL), 134 to 162 (CEGL…CKPL), 163 to 190 (ASVL…VRVL), 191 to 219 (CQGL…CRDL), 220 to 247 (CGIV…MAEL), 248 to 276 (CPGL…CGDL), 277 to 304 (CRVL…ARLL), 305 to 333 (CETL…CSHF), 334 to 361 (SSVL…VQEL), 362 to 390 (CQGL…CSSL), 391 to 418 (AATL…ILQL), and 419 to 447 (VESV…EDRL). Ser91 is subject to Phosphoserine.

In terms of assembly, forms high-affinity heterodimers with RNASE1, ANG and RNASE2.

It localises to the cytoplasm. It is found in the nucleus. Functionally, ribonuclease inhibitor which inhibits RNASE1, RNASE2 and angiogenin (ANG). May play a role in redox homeostasis. Required to inhibit the cytotoxic tRNA ribonuclease activity of ANG in the cytoplasm in absence of stress. Relocates to the nucleus in response to stress, relieving inhibition of ANG in the cytoplasm, and inhibiting the angiogenic activity of ANG in the nucleus. The sequence is that of Ribonuclease inhibitor (RNH1) from Pan troglodytes (Chimpanzee).